The sequence spans 162 residues: MTPLFRKAVWLLFAVSVCAFAGSLAAQYVLGMEPCVLCISQRLCVLATALCAAIVLMCRPRRKAGGLFGAVFISIPAVTGISVAAYQLWLQSLPPGTAPSCGAPWTFRLKGWPLFDWFEPVVRGFGNCAEPDYLLGVALPVWSVAYFLAVALTVWWAWARAK.

Residues 1 to 8 (MTPLFRKA) are Cytoplasmic-facing. The chain crosses the membrane as a helical span at residues 9–25 (VWLLFAVSVCAFAGSLA). At 26-43 (AQYVLGMEPCVLCISQRL) the chain is on the periplasmic side. A disulfide bridge links Cys-35 with Cys-38. Residues 44–60 (CVLATALCAAIVLMCRP) traverse the membrane as a helical segment. At 61 to 67 (RRKAGGL) the chain is on the cytoplasmic side. A helical membrane pass occupies residues 68–85 (FGAVFISIPAVTGISVAA). Residues 86–141 (YQLWLQSLPPGTAPSCGAPWTFRLKGWPLFDWFEPVVRGFGNCAEPDYLLGVALPV) are Periplasmic-facing. A disulfide bridge connects residues Cys-101 and Cys-128. A helical membrane pass occupies residues 142–160 (WSVAYFLAVALTVWWAWAR). The Cytoplasmic segment spans residues 161 to 162 (AK).

Belongs to the DsbB family.

It is found in the cell inner membrane. In terms of biological role, required for disulfide bond formation in some periplasmic proteins. Acts by oxidizing the DsbA protein. In Neisseria meningitidis serogroup A / serotype 4A (strain DSM 15465 / Z2491), this protein is Disulfide bond formation protein B.